A 191-amino-acid polypeptide reads, in one-letter code: Protein YceI (191 aa).

The N-terminal stretch at 1–22 (MKKSLLGLTFASLMFSAGSAVA) is a signal peptide.

This sequence belongs to the UPF0312 family. Type 1 subfamily.

It localises to the periplasm. In Escherichia coli O6:H1 (strain CFT073 / ATCC 700928 / UPEC), this protein is Protein YceI.